A 638-amino-acid polypeptide reads, in one-letter code: MSDKSELKAELERKKQRLAQIREEKKRKEEERKKKETDQKKEAAVSVQEESDLEKKRREAEALLQSMGLTTDSPIVFSEHWVPPPMSPSSKSVSTPSEAGSQDSGDGAVGSRTLHWDTDPSALQLHSDSDLGRGPIKLGMAKITQVDFPPREIVTYTKETQTPVTAQPKEDEEEEDDVAAPKPPVEPEEEKILKKDEENDSKAPPHELTEEEKQQILHSEEFLSFFDHSTRIVERALSEQINIFFDYSGRDLEDKEGEIQAGAKLSLNRQFFDERWSKHRVVSCLDWSSQYPELLVASYNNNEEAPHEPDGVALVWNMKYKKTTPEYVFHCQSAVMSATFAKFHPNLVVGGTYSGQIVLWDNRSNKRTPVQRTPLSAAAHTHPVYCVNVVGTQNAHNLISISTDGKICSWSLDMLSHPQDSMELVHKQSKAVAVTSMSFPVGDVNNFVVGSEEGSVYTACRHGSKAGISEMFEGHQGPITGIHCHAAVGAVDFSHLFVTSSFDWTVKLWSTKNNKPLYSFEDNSDYVYDVIGSPTHPALFACVDGMGRLDLWNLNNDTEVPTASISVEGNPALNRVRWTHSGREIAVGDSEGQIVIYDVGEQIAVPRNDEWARFGRTLAEINASRADAEEEAATRIPA.

Composition is skewed to basic and acidic residues over residues 1–13 (MSDKSELKAELER) and 20–43 (QIREEKKRKEEERKKKETDQKKEA). Disordered regions lie at residues 1-135 (MSDK…GRGP) and 154-209 (VTYT…HELT). Ser-2 carries the post-translational modification N-acetylserine. Ser-51 carries the post-translational modification Diphosphoserine. Phosphoserine is present on residues Ser-51 and Ser-90. Over residues 88–97 (PSSKSVSTPS) the composition is skewed to low complexity. Position 95 is a phosphothreonine (Thr-95). Phosphoserine occurs at positions 97, 101, and 104. Residues 133–165 (RGPIKLGMAKITQVDFPPREIVTYTKETQTPVT) form an interaction with DYNLT1 region. Basic and acidic residues predominate over residues 190–209 (EKILKKDEENDSKAPPHELT). WD repeat units follow at residues 277 to 326 (SKHR…TTPE), 330 to 370 (HCQS…RTPV), 379 to 420 (AHTH…HPQD), 429 to 469 (SKAV…AGIS), 474 to 519 (GHQG…PLYS), and 568 to 607 (EGNPALNRVRWTHSGREIAVGDSEGQIVIYDVGEQIAVPR).

It belongs to the dynein intermediate chain family. In terms of assembly, homodimer. The cytoplasmic dynein 1 complex consists of two catalytic heavy chains (HCs) and a number of non-catalytic subunits presented by intermediate chains (ICs), light intermediate chains (LICs) and light chains (LCs); the composition seems to vary in respect to the IC, LIC and LC composition. The heavy chain homodimer serves as a scaffold for the probable homodimeric assembly of the respective non-catalytic subunits. The ICs and LICs bind directly to the HC dimer and the LCs assemble on the IC dimer. Interacts with DYNLT3. Interacts with DYNLT1. Interacts (dephosphorylated at Ser-90) with DCTN1. Interacts with BICD2. Interacts with SPEF2. Interacts with CFAP61. Post-translationally, the phosphorylation status of Ser-90 appears to be involved in dynactin-dependent target binding. In terms of processing, pyrophosphorylation by 5-diphosphoinositol pentakisphosphate (5-IP7) promotes interaction with DCTN1. Serine pyrophosphorylation is achieved by Mg(2+)-dependent, but enzyme independent transfer of a beta-phosphate from a inositol pyrophosphate to a pre-phosphorylated serine residue. Skeletal muscle, testis, kidney, brain, heart and spleen.

The protein resides in the cytoplasm. It localises to the cytoskeleton. Functionally, acts as one of several non-catalytic accessory components of the cytoplasmic dynein 1 complex that are thought to be involved in linking dynein to cargos and to adapter proteins that regulate dynein function. Cytoplasmic dynein 1 acts as a motor for the intracellular retrograde motility of vesicles and organelles along microtubules. The intermediate chains mediate the binding of dynein to dynactin via its 150 kDa component (p150-glued) DCTN1. Involved in membrane-transport, such as Golgi apparatus, late endosomes and lysosomes. The protein is Cytoplasmic dynein 1 intermediate chain 2 (Dync1i2) of Rattus norvegicus (Rat).